The primary structure comprises 474 residues: Cytochrome c-552 (474 aa).

Positions 1–29 (MSIKHWMASSVSVTALVMTALLNITAVSA) are cleaved as a signal peptide. Residue His-91 participates in heme c binding. Heme-binding residues include Cys-119, Cys-122, and Lys-123. Residues Cys-157, Cys-160, His-161, Cys-206, Cys-209, and His-210 each contribute to the heme c site. Ca(2+) contacts are provided by Glu-212, Tyr-213, Lys-258, and Gln-260. Tyr-213 serves as a coordination point for substrate. Substrate is bound at residue His-261. 9 residues coordinate heme c: His-272, Cys-279, Cys-282, His-283, His-298, Cys-311, Cys-314, His-315, and His-390.

Belongs to the cytochrome c-552 family. It depends on Ca(2+) as a cofactor. Requires heme c as cofactor.

It localises to the periplasm. The catalysed reaction is 6 Fe(III)-[cytochrome c] + NH4(+) + 2 H2O = 6 Fe(II)-[cytochrome c] + nitrite + 8 H(+). It participates in nitrogen metabolism; nitrate reduction (assimilation). Catalyzes the reduction of nitrite to ammonia, consuming six electrons in the process. The chain is Cytochrome c-552 from Vibrio vulnificus (strain CMCP6).